Consider the following 335-residue polypeptide: Pyridoxal 5'-phosphate synthase subunit PdxS (335 aa).

A D-ribose 5-phosphate-binding site is contributed by D30. K87 acts as the Schiff-base intermediate with D-ribose 5-phosphate in catalysis. G159 contributes to the D-ribose 5-phosphate binding site. R171 contributes to the D-glyceraldehyde 3-phosphate binding site. D-ribose 5-phosphate contacts are provided by residues G257 and 278 to 279; that span reads GS.

The protein belongs to the PdxS/SNZ family. As to quaternary structure, in the presence of PdxT, forms a dodecamer of heterodimers.

It carries out the reaction aldehydo-D-ribose 5-phosphate + D-glyceraldehyde 3-phosphate + L-glutamine = pyridoxal 5'-phosphate + L-glutamate + phosphate + 3 H2O + H(+). The protein operates within cofactor biosynthesis; pyridoxal 5'-phosphate biosynthesis. Functionally, catalyzes the formation of pyridoxal 5'-phosphate from ribose 5-phosphate (RBP), glyceraldehyde 3-phosphate (G3P) and ammonia. The ammonia is provided by the PdxT subunit. Can also use ribulose 5-phosphate and dihydroxyacetone phosphate as substrates, resulting from enzyme-catalyzed isomerization of RBP and G3P, respectively. In Thermococcus onnurineus (strain NA1), this protein is Pyridoxal 5'-phosphate synthase subunit PdxS.